The primary structure comprises 244 residues: Cobalt transport protein CbiM (244 aa).

An N-terminal signal peptide occupies residues methionine 1 to alanine 28. The next 6 membrane-spanning stretches (helical) occupy residues leucine 36–leucine 56, threonine 71–valine 91, phenylalanine 108–leucine 128, threonine 135–tyrosine 155, proline 166–isoleucine 186, and glycine 208–leucine 228.

It belongs to the CbiM family. Forms an energy-coupling factor (ECF) transporter complex composed of an ATP-binding protein (A component, CbiO), a transmembrane protein (T component, CbiQ) and 2 possible substrate-capture proteins (S components, CbiM and CbiN) of unknown stoichimetry.

The protein resides in the cell membrane. It functions in the pathway cofactor biosynthesis; adenosylcobalamin biosynthesis. Part of the energy-coupling factor (ECF) transporter complex CbiMNOQ involved in cobalt import. This is Cobalt transport protein CbiM from Streptococcus sanguinis (strain SK36).